The chain runs to 92 residues: Large ribosomal subunit protein bL25 (92 aa).

The protein belongs to the bacterial ribosomal protein bL25 family. Part of the 50S ribosomal subunit; part of the 5S rRNA/L5/L18/L25 subcomplex. Contacts the 5S rRNA. Binds to the 5S rRNA independently of L5 and L18.

Functionally, this is one of the proteins that binds to the 5S RNA in the ribosome where it forms part of the central protuberance. In Vibrio parahaemolyticus serotype O3:K6 (strain RIMD 2210633), this protein is Large ribosomal subunit protein bL25.